The primary structure comprises 48 residues: DNA-directed RNA polymerase subunit Rpo12 (48 aa).

4 residues coordinate Zn(2+): Cys6, Cys9, Cys26, and Cys29.

The protein belongs to the archaeal Rpo12/eukaryotic RPC10 RNA polymerase subunit family. In terms of assembly, part of the 13-subunit RNA polymerase. Zn(2+) serves as cofactor.

The protein resides in the cytoplasm. It catalyses the reaction RNA(n) + a ribonucleoside 5'-triphosphate = RNA(n+1) + diphosphate. In terms of biological role, DNA-dependent RNA polymerase (RNAP) catalyzes the transcription of DNA into RNA using the four ribonucleoside triphosphates as substrates. This Sulfolobus acidocaldarius (strain ATCC 33909 / DSM 639 / JCM 8929 / NBRC 15157 / NCIMB 11770) protein is DNA-directed RNA polymerase subunit Rpo12.